We begin with the raw amino-acid sequence, 28 residues long: Flagellar filament 34 kDa core protein (28 aa).

Belongs to the bacterial flagellin family. In terms of assembly, the flagellum consists of an outer layer composed of repeating units of FlaA around a core that contains several antigenically related polypeptides.

Its subcellular location is the periplasmic flagellum. The protein resides in the periplasm. Component of the core of the flagella. This chain is Flagellar filament 34 kDa core protein, found in Treponema phagedenis.